The following is a 98-amino-acid chain: Large ribosomal subunit protein bL25 (98 aa).

Residues 1 to 23 are disordered; it reads MANFVLNAQARAEDKQGKGASRR.

The protein belongs to the bacterial ribosomal protein bL25 family. Part of the 50S ribosomal subunit; part of the 5S rRNA/L5/L18/L25 subcomplex. Contacts the 5S rRNA. Binds to the 5S rRNA independently of L5 and L18.

This is one of the proteins that binds to the 5S RNA in the ribosome where it forms part of the central protuberance. This is Large ribosomal subunit protein bL25 from Acinetobacter baumannii (strain AB307-0294).